The primary structure comprises 417 residues: MSGRMKEVVSWSPEEVTNWLMENAVPEYCEPLKSFTGQDLINLTEEDFKKTPLSRVSSDSGQQLLHMIETLKMAHHIEAHKNGHVNGHIHVSVNNTAHENGFSSKTKLNGVPNGYKKEMIKIPMPEPERLQYPMEWGKTFLAFIYALFCFIFTTVTISVVHERVPPKEVQPPLPDAFFDRFDRVQWAFSICEINGMILVGLWLVQWLLLKYKSIISRRFFCIVCTLYLYRCITMYVTTLPVPGMHFKCSPKLFGDWESHLRRIMKLIAGGGLSITGSHNMCGDYLYSGHTVILTLTYLFIKEYSPRRLWWYHWLCWTLSMVGMFCILLAHDHYTVDVVVAYYITTRLFWWYHTMANQQVLKEASQTNLLARVWWYKPFQYFEKNVQGIVPRSYHWPFPWPVLHRGRQVKYSRLVNDT.

Residues 11–74 (WSPEEVTNWL…LHMIETLKMA (64 aa)) form the SAM domain. 5 consecutive transmembrane segments (helical) span residues 140 to 160 (FLAF…ISVV), 188 to 208 (FSIC…QWLL), 219 to 239 (FFCI…VTTL), 280 to 300 (MCGD…YLFI), and 308 to 328 (LWWY…CILL). H289 is a catalytic residue. Residues 329–417 (AHDHYTVDVV…VKYSRLVNDT (89 aa)) lie on the Cytoplasmic side of the membrane. Residues H332 and D336 contribute to the active site.

It belongs to the sphingomyelin synthase family.

The protein resides in the golgi apparatus membrane. The enzyme catalyses an N-acylsphing-4-enine + a 1,2-diacyl-sn-glycero-3-phosphocholine = a sphingomyelin + a 1,2-diacyl-sn-glycerol. The catalysed reaction is an N-acylsphing-4-enine + a 1,2-diacyl-sn-glycero-3-phosphoethanolamine = an N-acylsphing-4-enine 1-phosphoethanolamine + a 1,2-diacyl-sn-glycerol. Functionally, major sphingomyelin synthase at the Golgi apparatus. Catalyzes the reversible transfer of phosphocholine moiety in sphingomyelin biosynthesis: in the forward reaction transfers phosphocholine head group of phosphatidylcholine (PC) on to ceramide (CER) to form ceramide phosphocholine (sphingomyelin, SM) and diacylglycerol (DAG) as by-product, and in the reverse reaction transfers phosphocholine from SM to DAG to form PC and CER. The direction of the reaction depends on the levels of CER and DAG in Golgi membranes. Converts the newly synthesized CER, that is transported from the endoplasmic reticulum to the trans-Golgi by the Cer transport protein (CERT), to SM. Can form a heteromeric complex with glucosylceramide synthase (GCS) increasing SMS activity and reducing glucosylceramide synthesis, a critical mechanism that controls the metabolic fate of CER in the Golgi. Does not use free phosphorylcholine or CDP-choline as donor. Can also transfer phosphoethanolamine head group of phosphatidylethanolamine (PE) on to CER to form ceramide phosphoethanolamine (CPE). Regulates receptor-mediated signal transduction via mitogenic DAG and proapoptotic CER, as well as via SM, a structural component of membrane rafts that serve as platforms for signal transduction and protein sorting. Plays a role in secretory transport via regulation of DAG pool at the Golgi apparatus and its downstream effects on PRKD1. The chain is Phosphatidylcholine:ceramide cholinephosphotransferase 1 (SGMS1) from Gallus gallus (Chicken).